The following is a 103-amino-acid chain: Large ribosomal subunit protein bL21 (103 aa).

The protein belongs to the bacterial ribosomal protein bL21 family. As to quaternary structure, part of the 50S ribosomal subunit. Contacts protein L20.

Functionally, this protein binds to 23S rRNA in the presence of protein L20. The polypeptide is Large ribosomal subunit protein bL21 (Vibrio atlanticus (strain LGP32) (Vibrio splendidus (strain Mel32))).